The chain runs to 454 residues: Phosphoglucosamine mutase (454 aa).

The active-site Phosphoserine intermediate is the Ser-104. 4 residues coordinate Mg(2+): Ser-104, Asp-247, Asp-249, and Asp-251. Phosphoserine is present on Ser-104.

It belongs to the phosphohexose mutase family. Mg(2+) serves as cofactor. Post-translationally, activated by phosphorylation.

The enzyme catalyses alpha-D-glucosamine 1-phosphate = D-glucosamine 6-phosphate. Functionally, catalyzes the conversion of glucosamine-6-phosphate to glucosamine-1-phosphate. The sequence is that of Phosphoglucosamine mutase from Bifidobacterium animalis subsp. lactis (strain AD011).